The primary structure comprises 930 residues: Inter-alpha-trypsin inhibitor heavy chain H4 (930 aa).

Positions 1–28 (MKPPRPVRTCSKVLVLLSLLAIHQTTTA) are cleaved as a signal peptide. Positions 29–148 (EKNGIDIYSL…KITFELVYEE (120 aa)) constitute a VIT domain. Asparagine 81 and asparagine 207 each carry an N-linked (GlcNAc...) asparagine glycan. The 161-residue stretch at 272–432 (PKNVVFVIDK…YAFLEKLALD (161 aa)) folds into the VWFA domain. The N-linked (GlcNAc...) asparagine; atypical glycan is linked to asparagine 274. N-linked (GlcNAc...) asparagine glycosylation is found at asparagine 517 and asparagine 577. The tract at residues 595-618 (KPDDQEQSQVAEKPMEGESRNRNV) is disordered. The interval 658–688 (MNFRPGVLSSRQLGLPGPPDVPDHAAYHPFR) is proline-rich (PRR) potential bioactive peptide. Positions 662–688 (PGVLSSRQLGLPGPPDVPDHAAYHPFR) are cleaved as a propeptide — potentially active peptide. O-linked (GalNAc...) threonine glycans are attached at residues threonine 719, threonine 720, and threonine 722. The tract at residues 719 to 725 (TTMTTQT) is O-glycosylated at three sites. The cysteines at positions 747 and 925 are disulfide-linked.

This sequence belongs to the ITIH family. Interacts (via C-terminus) with DNAJC1 (via SANT 2 domain); this interaction protects ITIH4 against cleavage by kallikrein in vitro. Post-translationally, cleaved by plasma kallikrein to yield 100 kDa and 35 kDa fragments, and the resulting 100 kDa fragment is further converted to a 70 kDa fragment. In terms of processing, N- and O-glycosylated. In urine, O-linked glycosylation on threonine residues in the region from Thr-719 to Thr-725 consists of core 1 or possibly core 8 glycans. Mainly Hex(HexNAc)(2), but also some Hex(3)(HexNAc)(3). N-glycosylated but not O-glycosylated in plasma. As to expression, liver specific.

It is found in the secreted. In terms of biological role, type II acute-phase protein (APP) involved in inflammatory responses to trauma. May also play a role in liver development or regeneration. The polypeptide is Inter-alpha-trypsin inhibitor heavy chain H4 (ITIH4) (Homo sapiens (Human)).